A 419-amino-acid polypeptide reads, in one-letter code: UDP-N-acetylglucosamine 1-carboxyvinyltransferase (419 aa).

Position 22-23 (22-23 (KN)) interacts with phosphoenolpyruvate. R91 is a UDP-N-acetyl-alpha-D-glucosamine binding site. Catalysis depends on C115, which acts as the Proton donor. A 2-(S-cysteinyl)pyruvic acid O-phosphothioketal modification is found at C115. Residues 120 to 124 (RPVDL), 160 to 163 (KVSV), D305, and V327 each bind UDP-N-acetyl-alpha-D-glucosamine.

The protein belongs to the EPSP synthase family. MurA subfamily.

It is found in the cytoplasm. It catalyses the reaction phosphoenolpyruvate + UDP-N-acetyl-alpha-D-glucosamine = UDP-N-acetyl-3-O-(1-carboxyvinyl)-alpha-D-glucosamine + phosphate. It functions in the pathway cell wall biogenesis; peptidoglycan biosynthesis. In terms of biological role, cell wall formation. Adds enolpyruvyl to UDP-N-acetylglucosamine. The chain is UDP-N-acetylglucosamine 1-carboxyvinyltransferase from Shigella sonnei (strain Ss046).